A 488-amino-acid chain; its full sequence is Proline--tRNA ligase (488 aa).

Belongs to the class-II aminoacyl-tRNA synthetase family. ProS type 3 subfamily. In terms of assembly, homodimer.

Its subcellular location is the cytoplasm. The catalysed reaction is tRNA(Pro) + L-proline + ATP = L-prolyl-tRNA(Pro) + AMP + diphosphate. Its function is as follows. Catalyzes the attachment of proline to tRNA(Pro) in a two-step reaction: proline is first activated by ATP to form Pro-AMP and then transferred to the acceptor end of tRNA(Pro). This Pyrobaculum aerophilum (strain ATCC 51768 / DSM 7523 / JCM 9630 / CIP 104966 / NBRC 100827 / IM2) protein is Proline--tRNA ligase.